Here is a 190-residue protein sequence, read N- to C-terminus: dCTP deaminase, dUMP-forming (190 aa).

Residues 101-106 (KSSLGR), Asp119, 127-129 (TLE), Gln148, Tyr162, Lys170, and Gln174 contribute to the dCTP site. Glu129 acts as the Proton donor/acceptor in catalysis. Positions 160 to 190 (HPYGSSRAGSKYQGQRGPTPSRSYQNFIRST) are disordered. The segment covering 171-190 (YQGQRGPTPSRSYQNFIRST) has biased composition (polar residues).

The protein belongs to the dCTP deaminase family. In terms of assembly, homotrimer.

It carries out the reaction dCTP + 2 H2O = dUMP + NH4(+) + diphosphate. It functions in the pathway pyrimidine metabolism; dUMP biosynthesis; dUMP from dCTP: step 1/1. Its function is as follows. Bifunctional enzyme that catalyzes both the deamination of dCTP to dUTP and the hydrolysis of dUTP to dUMP without releasing the toxic dUTP intermediate. The protein is dCTP deaminase, dUMP-forming of Mycobacterium tuberculosis (strain ATCC 25177 / H37Ra).